A 71-amino-acid chain; its full sequence is UPF0346 protein SZO_05010 (71 aa).

Belongs to the UPF0346 family.

The sequence is that of UPF0346 protein SZO_05010 from Streptococcus equi subsp. zooepidemicus (strain H70).